Reading from the N-terminus, the 162-residue chain is Large ribosomal subunit protein uL10 (162 aa).

Belongs to the universal ribosomal protein uL10 family. Part of the ribosomal stalk of the 50S ribosomal subunit. The N-terminus interacts with L11 and the large rRNA to form the base of the stalk. The C-terminus forms an elongated spine to which L12 dimers bind in a sequential fashion forming a multimeric L10(L12)X complex.

Functionally, forms part of the ribosomal stalk, playing a central role in the interaction of the ribosome with GTP-bound translation factors. The sequence is that of Large ribosomal subunit protein uL10 from Borrelia duttonii (strain Ly).